A 562-amino-acid chain; its full sequence is Arginine--tRNA ligase (562 aa).

Residues 122 to 132 (PNIAKDMHVGH) carry the 'HIGH' region motif.

The protein belongs to the class-I aminoacyl-tRNA synthetase family. As to quaternary structure, monomer.

It is found in the cytoplasm. The enzyme catalyses tRNA(Arg) + L-arginine + ATP = L-arginyl-tRNA(Arg) + AMP + diphosphate. In Chlamydia felis (strain Fe/C-56) (Chlamydophila felis), this protein is Arginine--tRNA ligase.